The chain runs to 328 residues: UPF0252 protein PF0978 (328 aa).

The helical transmembrane segment at 3–23 (VPLLILLFLVLTSGCIAPSTP) threads the bilayer.

It belongs to the UPF0252 family.

It is found in the membrane. This Pyrococcus furiosus (strain ATCC 43587 / DSM 3638 / JCM 8422 / Vc1) protein is UPF0252 protein PF0978.